Here is a 297-residue protein sequence, read N- to C-terminus: Ribosomal RNA small subunit methyltransferase H (297 aa).

S-adenosyl-L-methionine contacts are provided by residues 37–39 (GGH), Glu56, Phe87, Asp102, and His109.

It belongs to the methyltransferase superfamily. RsmH family.

The protein localises to the cytoplasm. It carries out the reaction cytidine(1402) in 16S rRNA + S-adenosyl-L-methionine = N(4)-methylcytidine(1402) in 16S rRNA + S-adenosyl-L-homocysteine + H(+). Functionally, specifically methylates the N4 position of cytidine in position 1402 (C1402) of 16S rRNA. This chain is Ribosomal RNA small subunit methyltransferase H, found in Borrelia hermsii (strain HS1 / DAH).